Here is a 545-residue protein sequence, read N- to C-terminus: Tripartite motif-containing 55 (545 aa).

An RING-type zinc finger spans residues 26–82 (CPICLEMFTKPVVILPCQHNLCRKCASDIFQASNPYLPTRGGTTVASGGRFRCPSCR). The segment at 119 to 161 (LDQPMCEEHEEERINIYCLNCEVPTCSLCKVFGAHKDCQVAPL) adopts a B box-type zinc-finger fold. Cysteine 124, histidine 127, cysteine 147, and histidine 153 together coordinate Zn(2+). The 59-residue stretch at 269–327 (MDEPEMAVFLQNAKTLLQKIVEASKAFQMEKLEQGYEIMSNFTVNLNREEKIIREIDFS) folds into the COS domain. Disordered stretches follow at residues 324 to 352 (IDFS…VEVE), 359 to 378 (IASS…SQLP), and 417 to 532 (SQQT…EPAR). Residues 328–352 (REEEEEEDAGEIDEEGEGEDAVEVE) show a composition bias toward acidic residues. Over residues 417-428 (SQQTTQSETSGP) the composition is skewed to polar residues. The span at 474 to 485 (SSVQSAEVAEAA) shows a compositional bias: low complexity. A compositionally biased stretch (polar residues) spans 486–506 (TNEQAAVSGKESSSTAATSQI).

In terms of processing, targeted for degradation through the proteasomal and lysosomal pathways in the presence of SUMO3. As to expression, widely expressed in various tissues, besides skeletal muscle and heart, such as brain, lung, liver, spleen and kidney.

It localises to the nucleus. It is found in the cytoplasm. The catalysed reaction is S-ubiquitinyl-[E2 ubiquitin-conjugating enzyme]-L-cysteine + [acceptor protein]-L-lysine = [E2 ubiquitin-conjugating enzyme]-L-cysteine + N(6)-ubiquitinyl-[acceptor protein]-L-lysine.. Its function is as follows. E3 ubiquitin ligase that plays an important role in regulating cardiac development and contractility, muscle growth, metabolism, and fiber-type differentiation. Acts as a critical factor that regulates cardiomyocyte size during development in concert with TRIM63 by regulating E2F1-mediated gene expression. Plays a role in apoptosis induction in cardiomyocytes by promoting ubiquitination of the DUSP1 phosphatase. Promotes non-canonical NF-kappa-B signaling and B-cell-mediated immune responses by mediating NFKB2 'Lys-48'-linked ubiquitination and processing. In turn, NFKB2 is further processed by valosin-containing protein/VCP, an ATPase that mediates ubiquitin-dependent protein degradation by the proteasome. May play a role in preventing macrophages from producing inflammatory factors and migrating by downregulating the level of nuclear NF-kappa-B subunit RELA. Modifies also PPARG via polyubiquitination and accelerates PPARG proteasomal degradation to inhibit its activity. The sequence is that of Tripartite motif-containing 55 (Trim55) from Mus musculus (Mouse).